Reading from the N-terminus, the 203-residue chain is MKTFQLMMISFLFVAITTTSGVVSEGNDVVYDGEGDPVKPNVPYYISFMTSDYNMWICRMQYGSTDPNSCPQQPLMVTHPNLAAPTPVMFVLANKSDVVRESAKLKIKFVGPRQCGKSGFWKVVQRNSSEGEVFLNGSKSMSHNDSTFAIHKTNEYYKFTFGDGDYPTTISMTNDYPIYRLLSKRLSGEMEIYFYKNLTTSEG.

Residues 1-21 (MKTFQLMMISFLFVAITTTSG) form the signal peptide. Cys70 and Cys115 are oxidised to a cystine. N-linked (GlcNAc...) asparagine glycans are attached at residues Asn94, Asn127, Asn136, Asn144, and Asn197.

The protein belongs to the protease inhibitor I3 (leguminous Kunitz-type inhibitor) family.

Its function is as follows. Exhibits Kunitz trypsin protease inhibitor activity. This Arabidopsis thaliana (Mouse-ear cress) protein is Kunitz trypsin inhibitor 6.